Here is a 163-residue protein sequence, read N- to C-terminus: Lipoprotein signal peptidase (163 aa).

A run of 3 helical transmembrane segments spans residues 3-23 (IPLI…IIIL), 70-90 (NYIL…TMYN), and 94-114 (IENF…IGNF). Catalysis depends on residues Asp-125 and Asp-143. Residues 134-154 (WHFATFNIADVSIFIGSVLFI) traverse the membrane as a helical segment.

This sequence belongs to the peptidase A8 family.

It localises to the cell membrane. It carries out the reaction Release of signal peptides from bacterial membrane prolipoproteins. Hydrolyzes -Xaa-Yaa-Zaa-|-(S,diacylglyceryl)Cys-, in which Xaa is hydrophobic (preferably Leu), and Yaa (Ala or Ser) and Zaa (Gly or Ala) have small, neutral side chains.. It functions in the pathway protein modification; lipoprotein biosynthesis (signal peptide cleavage). Its function is as follows. This protein specifically catalyzes the removal of signal peptides from prolipoproteins. The protein is Lipoprotein signal peptidase of Buchnera aphidicola subsp. Baizongia pistaciae (strain Bp).